A 177-amino-acid chain; its full sequence is MSDIILDSKSFQSAVSKISREISDNNKNIREVAIIGIQNKGVFLAKRILAEIAKLAGIGRSLIPFGTLDITLYRDDLDDLGSKIPVIKDTVIPFDTSRKNIILIDDVLYTGRTVRAALDVLMDFGRPKSIQLAVLIDRGFRELPIEAKYIGIRYQSEELIKVECKETDGVDRVTFIK.

Positions 101–113 match the PRPP-binding motif; it reads IILIDDVLYTGRT.

Belongs to the purine/pyrimidine phosphoribosyltransferase family. PyrR subfamily.

The catalysed reaction is UMP + diphosphate = 5-phospho-alpha-D-ribose 1-diphosphate + uracil. Functionally, regulates the transcription of the pyrimidine nucleotide (pyr) operon in response to exogenous pyrimidines. In terms of biological role, also displays a weak uracil phosphoribosyltransferase activity which is not physiologically significant. This chain is Bifunctional protein PyrR, found in Endomicrobium trichonymphae.